The primary structure comprises 137 residues: Large ribosomal subunit protein uL16 (137 aa).

The protein belongs to the universal ribosomal protein uL16 family. As to quaternary structure, part of the 50S ribosomal subunit.

In terms of biological role, binds 23S rRNA and is also seen to make contacts with the A and possibly P site tRNAs. This is Large ribosomal subunit protein uL16 from Halorhodospira halophila (strain DSM 244 / SL1) (Ectothiorhodospira halophila (strain DSM 244 / SL1)).